We begin with the raw amino-acid sequence, 346 residues long: Putative [LysW]-L-2-aminoadipate/[LysW]-L-glutamate phosphate reductase (346 aa).

NADP(+) is bound at residue 12–15 (SGFT). Residue cysteine 147 is part of the active site. Asparagine 310 contributes to the NADP(+) binding site.

It belongs to the NAGSA dehydrogenase family. Type 1 subfamily. LysY sub-subfamily.

It localises to the cytoplasm. The enzyme catalyses [amino-group carrier protein]-C-terminal-N-(1-carboxy-5-oxopentan-1-yl)-L-glutamine + phosphate + NADP(+) = [amino-group carrier protein]-C-terminal-N-(1-carboxy-5-phosphooxy-5-oxopentan-1-yl)-L-glutamine + NADPH + H(+). The catalysed reaction is [amino-group carrier protein]-C-terminal-gamma-(L-glutamyl-5-semialdehyde)-L-glutamate + phosphate + NADP(+) = [amino-group carrier protein]-C-terminal-gamma-(5-phospho-L-glutamyl)-L-glutamate + NADPH + H(+). It functions in the pathway amino-acid biosynthesis; L-lysine biosynthesis via AAA pathway; L-lysine from L-alpha-aminoadipate (Thermus route): step 3/5. It participates in amino-acid biosynthesis; L-arginine biosynthesis. Its function is as follows. Involved in both the arginine and lysine biosynthetic pathways. The sequence is that of Putative [LysW]-L-2-aminoadipate/[LysW]-L-glutamate phosphate reductase from Natronomonas pharaonis (strain ATCC 35678 / DSM 2160 / CIP 103997 / JCM 8858 / NBRC 14720 / NCIMB 2260 / Gabara) (Halobacterium pharaonis).